The chain runs to 86 residues: Co-chaperonin GroES (86 aa).

The protein belongs to the GroES chaperonin family. As to quaternary structure, heptamer of 7 subunits arranged in a ring. Interacts with the chaperonin GroEL.

It is found in the cytoplasm. In terms of biological role, together with the chaperonin GroEL, plays an essential role in assisting protein folding. The GroEL-GroES system forms a nano-cage that allows encapsulation of the non-native substrate proteins and provides a physical environment optimized to promote and accelerate protein folding. GroES binds to the apical surface of the GroEL ring, thereby capping the opening of the GroEL channel. The sequence is that of Co-chaperonin GroES from Campylobacter jejuni subsp. jejuni serotype O:6 (strain 81116 / NCTC 11828).